The chain runs to 173 residues: Large ribosomal subunit protein uL14mz (173 aa).

Residues 1-61 (MAAAFASRLT…TVLKVVDNSG (61 aa)) constitute a mitochondrion transit peptide.

Belongs to the universal ribosomal protein uL14 family. Part of the mitochondrial 50S ribosomal subunit. As to expression, mostly expressed in leaves and inflorescences, including floral organs and meristems, and, to a lower extent, in pistils.

The protein localises to the mitochondrion. Its function is as follows. Binds to 23S rRNA in mitochondrion. The polypeptide is Large ribosomal subunit protein uL14mz (HLP) (Arabidopsis thaliana (Mouse-ear cress)).